The sequence spans 221 residues: Probable septum site-determining protein MinC (221 aa).

It belongs to the MinC family. In terms of assembly, interacts with MinD and FtsZ.

Its function is as follows. Cell division inhibitor that blocks the formation of polar Z ring septums. Rapidly oscillates between the poles of the cell to destabilize FtsZ filaments that have formed before they mature into polar Z rings. Prevents FtsZ polymerization. The polypeptide is Probable septum site-determining protein MinC (Shewanella sp. (strain ANA-3)).